We begin with the raw amino-acid sequence, 1086 residues long: Ribonuclease 3 (1086 aa).

2 disordered regions span residues 1–77 (MSDE…DSPR) and 158–233 (CHSM…LRNF). Basic residues predominate over residues 13 to 23 (PKHKRARRKKY). The span at 24–35 (QKEYQERHKEEM) shows a compositional bias: basic and acidic residues. The span at 43 to 53 (FQNQPSTSSAP) shows a compositional bias: polar residues. A compositionally biased stretch (basic residues) spans 159-168 (HSMKGRKTPK). Residues 181-190 (VSDDSNDSQD) are compositionally biased toward acidic residues. Over residues 191 to 201 (EASTSEPTNRQ) the composition is skewed to polar residues. Residues 203 to 217 (PEADKTGEVKDEKQT) are compositionally biased toward basic and acidic residues. RNase III domains follow at residues 607–781 (LDVF…LDGG) and 833–957 (FHAL…VDRG). The Mg(2+) site is built by glutamate 694, asparagine 767, glutamate 770, glutamate 873, aspartate 943, and glutamate 946. The DRBM domain occupies 984–1059 (DAKSHLQQWC…AELALANLES (76 aa)).

The protein belongs to the ribonuclease III family. Mg(2+) serves as cofactor. It depends on Mn(2+) as a cofactor.

It is found in the nucleus. It catalyses the reaction Endonucleolytic cleavage to 5'-phosphomonoester.. Functionally, executes the initial step of microRNA (miRNA) processing in the nucleus, that is the cleavage of pri-miRNA to release pre-miRNA. Involved in pre-rRNA processing. Cleaves double-strand RNA and does not cleave single-strand RNA. Involved in fertility. Required for the function or synthesis of the let-7 miRNA. The sequence is that of Ribonuclease 3 (drsh-1) from Caenorhabditis elegans.